The following is a 154-amino-acid chain: UPF0547 protein C16orf87 homolog (154 aa).

The interval 46–119 (HPEKAPSSTE…KHEEEREKQE (74 aa)) is disordered. Basic and acidic residues predominate over residues 68-84 (VRREKINSTVNKDLENR). Residue Ser-91 is modified to Phosphoserine. Residues 104 to 132 (KSASAKKHEEEREKQEKEIDIYANLSDEK) adopt a coiled-coil conformation. Residues 109-119 (KKHEEEREKQE) are compositionally biased toward basic and acidic residues.

Belongs to the UPF0547 family.

The polypeptide is UPF0547 protein C16orf87 homolog (Bos taurus (Bovine)).